A 186-amino-acid polypeptide reads, in one-letter code: UPF0301 protein PM1869 (186 aa).

This sequence belongs to the UPF0301 (AlgH) family.

The sequence is that of UPF0301 protein PM1869 from Pasteurella multocida (strain Pm70).